The primary structure comprises 117 residues: MKGLLYLALAIVSEVFGSTMLKLSEGFTQAWPIGGVIAGFLSAFTFLSFSLKTIDLSSAYATWSGVGTALTAIVGFLLFGETISLKGVFGLTLVIAGVVVLNQSKAPAKEKKQTVCE.

4 consecutive transmembrane segments (helical) span residues 3–23 (GLLY…MLKL), 31–51 (WPIG…SFSL), 59–79 (AYAT…FLLF), and 81–101 (ETIS…VVVL).

The protein belongs to the drug/metabolite transporter (DMT) superfamily. Small multidrug resistance (SMR) (TC 2.A.7.1) family. EbrA/EbrB subfamily. As to quaternary structure, the efflux pump is composed of EbrA and EbrB.

The protein resides in the cell membrane. Functionally, part of a multidrug efflux pump. Confers resistance to cationic lipophilic dyes such as ethidium bromide, acriflavine, pyronine Y and safranin O. The efflux is probably coupled to an influx of protons. In Bacillus atrophaeus, this protein is Multidrug resistance protein EbrB (ebrB).